The following is a 670-amino-acid chain: UvrABC system protein B (670 aa).

Residues 26–183 form the Helicase ATP-binding domain; it reads NGLKSGLAFQ…QRLVDLQYNR (158 aa). 39 to 46 serves as a coordination point for ATP; that stretch reads GVTGSGKT. The Beta-hairpin motif lies at 92–115; sequence YYDYYQPEAYVPSSDSFIEKDAAI. The Helicase C-terminal domain occupies 431–597; that stretch reads QVDDLLSEIN…GLSKQVNDVM (167 aa). The UVR domain maps to 630–665; the sequence is LKQIALSEKQMFACAKNLEFEKAALFRDEVTKLHEQ.

This sequence belongs to the UvrB family. As to quaternary structure, forms a heterotetramer with UvrA during the search for lesions. Interacts with UvrC in an incision complex.

Its subcellular location is the cytoplasm. Its function is as follows. The UvrABC repair system catalyzes the recognition and processing of DNA lesions. A damage recognition complex composed of 2 UvrA and 2 UvrB subunits scans DNA for abnormalities. Upon binding of the UvrA(2)B(2) complex to a putative damaged site, the DNA wraps around one UvrB monomer. DNA wrap is dependent on ATP binding by UvrB and probably causes local melting of the DNA helix, facilitating insertion of UvrB beta-hairpin between the DNA strands. Then UvrB probes one DNA strand for the presence of a lesion. If a lesion is found the UvrA subunits dissociate and the UvrB-DNA preincision complex is formed. This complex is subsequently bound by UvrC and the second UvrB is released. If no lesion is found, the DNA wraps around the other UvrB subunit that will check the other stand for damage. This is UvrABC system protein B from Psychromonas ingrahamii (strain DSM 17664 / CCUG 51855 / 37).